We begin with the raw amino-acid sequence, 117 residues long: uncharacterized protein (117 aa).

This sequence belongs to the transposase 34 family.

This is an uncharacterized protein from Sinorhizobium fredii (strain NBRC 101917 / NGR234).